Reading from the N-terminus, the 676-residue chain is Envelope glycoprotein (676 aa).

Positions 1-34 (MACSTLSKSPKDKIDPRDLLIPLILFLSLKGARS) are cleaved as a signal peptide. A receptor-binding domain (RBD) region spans residues 35–270 (AAPGSSPHQV…KYQNLGPRVP (236 aa)). The Extracellular portion of the chain corresponds to 35 to 620 (AAPGSSPHQV…FNRSPWFTTL (586 aa)). N-linked (GlcNAc...) asparagine; by host glycosylation is present at asparagine 46. Disulfide bonds link cysteine 80-cysteine 132, cysteine 106-cysteine 121, cysteine 107-cysteine 117, cysteine 155-cysteine 175, and cysteine 167-cysteine 180. Histidine 89 provides a ligand contact to Zn(2+). Aspartate 120 provides a ligand contact to Zn(2+). Asparagine 202 is a glycosylation site (N-linked (GlcNAc...) asparagine; by host). A disulfide bridge links cysteine 212 with cysteine 218. Residues 287–322 (NPLPKPAKSPSASNSTPTLISPSPAPTQPPPAGTGD) are disordered. Residues 294 to 308 (KSPSASNSTPTLISP) are compositionally biased toward low complexity. Positions 309-318 (SPAPTQPPPA) are enriched in pro residues. An N-linked (GlcNAc...) asparagine; by host glycan is attached at asparagine 336. Cystine bridges form between cysteine 346–cysteine 349, cysteine 346–cysteine 573, cysteine 376–cysteine 430, cysteine 395–cysteine 407, cysteine 437–cysteine 450, and cysteine 565–cysteine 572. Residues 346 to 349 (CWLC) carry the CXXC motif. 2 N-linked (GlcNAc...) asparagine; by host glycosylation sites follow: asparagine 368 and asparagine 375. N-linked (GlcNAc...) asparagine; by host glycans are attached at residues asparagine 408 and asparagine 444. The interval 482-502 (VSLTLALLLGGLTMGGIAAGV) is fusion peptide. A coiled-coil region spans residues 513–547 (QQFQQLHAAVQDDLKEVEKSITNLEKSLTSLSEVV). The immunosuppression stretch occupies residues 548-564 (LQNRRGLDLLFLKEGGL). The CX6CC motif lies at 565–573 (CAALKEECC). Residues 621–641 (ISTIMGPLIILLLILLFGPCI) traverse the membrane as a helical segment. The S-palmitoyl cysteine; by host moiety is linked to residue cysteine 640. At 642–676 (LNRLVQFVKDRISVVQALVLTQQYHQLKPLEYEPQ) the chain is on the cytoplasmic side. A YXXL motif; contains endocytosis signal motif is present at residues 665–668 (YHQL).

The mature envelope protein (Env) consists of a trimer of SU-TM heterodimers attached by a labile interchain disulfide bond. Post-translationally, specific enzymatic cleavages in vivo yield mature proteins. Envelope glycoproteins are synthesized as an inactive precursor that is N-glycosylated and processed likely by host cell furin or by a furin-like protease in the Golgi to yield the mature SU and TM proteins. The cleavage site between SU and TM requires the minimal sequence [KR]-X-[KR]-R. The R-peptide is released from the C-terminus of the cytoplasmic tail of the TM protein upon particle formation as a result of proteolytic cleavage by the viral protease. Cleavage of this peptide is required for TM to become fusogenic. The CXXC motif is highly conserved across a broad range of retroviral envelope proteins. It is thought to participate in the formation of a labile disulfide bond possibly with the CX6CC motif present in the transmembrane protein. Isomerization of the intersubunit disulfide bond to an SU intrachain disulfide bond is thought to occur upon receptor recognition in order to allow membrane fusion. In terms of processing, the transmembrane protein is palmitoylated. Post-translationally, the R-peptide is palmitoylated.

It localises to the virion membrane. The protein resides in the host cell membrane. The surface protein (SU) attaches the virus to the host cell by binding to its receptor. This interaction triggers the refolding of the transmembrane protein (TM) and is thought to activate its fusogenic potential by unmasking its fusion peptide. Fusion occurs at the host cell plasma membrane. In terms of biological role, the transmembrane protein (TM) acts as a class I viral fusion protein. Under the current model, the protein has at least 3 conformational states: pre-fusion native state, pre-hairpin intermediate state, and post-fusion hairpin state. During viral and target cell membrane fusion, the coiled coil regions (heptad repeats) assume a trimer-of-hairpins structure, positioning the fusion peptide in close proximity to the C-terminal region of the ectodomain. The formation of this structure appears to drive apposition and subsequent fusion of viral and target cell membranes. Membranes fusion leads to delivery of the nucleocapsid into the cytoplasm. The protein is Envelope glycoprotein (env) of Mus musculus (Mouse).